The primary structure comprises 500 residues: Protein FAM114A2 (500 aa).

The segment at 1-82 is disordered; the sequence is MSNKDDLETA…AAGKETVSKD (82 aa). A phosphoserine mark is found at Ser93, Ser152, and Ser215.

Belongs to the FAM114 family.

The polypeptide is Protein FAM114A2 (FAM114A1) (Bos taurus (Bovine)).